A 229-amino-acid chain; its full sequence is Dihydrofolate reductase (229 aa).

Residues 11 to 227 (SITAVVAATA…VKYIFEMWVL (217 aa)) form the DHFR domain. Residues Ala-17 and 23–29 (GIGLNGG) each bind NADP(+). 37–42 (EMKYFA) serves as a coordination point for substrate. 64 to 66 (RKT) provides a ligand contact to NADP(+). Substrate is bound at residue Arg-80. Residues 86–88 (SGK) and 127–134 (GGATLYTS) contribute to the NADP(+) site.

The protein belongs to the dihydrofolate reductase family. Monomer.

The catalysed reaction is (6S)-5,6,7,8-tetrahydrofolate + NADP(+) = 7,8-dihydrofolate + NADPH + H(+). It participates in cofactor biosynthesis; tetrahydrofolate biosynthesis; 5,6,7,8-tetrahydrofolate from 7,8-dihydrofolate: step 1/1. Functionally, key enzyme in folate metabolism. Catalyzes an essential reaction for de novo glycine and purine synthesis, and for DNA precursor synthesis. This chain is Dihydrofolate reductase (DFR1), found in Cryptococcus neoformans var. neoformans serotype D (strain JEC21 / ATCC MYA-565) (Filobasidiella neoformans).